The following is a 300-amino-acid chain: Probable endonuclease 4 (300 aa).

9 residues coordinate Zn(2+): His-69, His-110, Glu-145, Asp-179, His-182, His-214, Asp-227, His-229, and Glu-259.

Belongs to the AP endonuclease 2 family. The cofactor is Zn(2+).

It carries out the reaction Endonucleolytic cleavage to 5'-phosphooligonucleotide end-products.. In terms of biological role, endonuclease IV plays a role in DNA repair. It cleaves phosphodiester bonds at apurinic or apyrimidinic (AP) sites, generating a 3'-hydroxyl group and a 5'-terminal sugar phosphate. The protein is Probable endonuclease 4 of Lachnoclostridium phytofermentans (strain ATCC 700394 / DSM 18823 / ISDg) (Clostridium phytofermentans).